A 1358-amino-acid chain; its full sequence is DNA-directed RNA polymerase subunit beta (1358 aa).

Belongs to the RNA polymerase beta chain family. In terms of assembly, the RNAP catalytic core consists of 2 alpha, 1 beta, 1 beta' and 1 omega subunit. When a sigma factor is associated with the core the holoenzyme is formed, which can initiate transcription.

It catalyses the reaction RNA(n) + a ribonucleoside 5'-triphosphate = RNA(n+1) + diphosphate. In terms of biological role, DNA-dependent RNA polymerase catalyzes the transcription of DNA into RNA using the four ribonucleoside triphosphates as substrates. This Francisella tularensis subsp. mediasiatica (strain FSC147) protein is DNA-directed RNA polymerase subunit beta.